We begin with the raw amino-acid sequence, 508 residues long: UBX domain-containing protein 4 (508 aa).

An interaction with UBQLN1 region spans residues 1 to 200 (MLWFQGAIPA…PAEDLNIRVE (200 aa)). The Cytoplasmic portion of the chain corresponds to 1–413 (MLWFQGAIPA…VHSSSGDIWT (413 aa)). 2 stretches are compositionally biased toward polar residues: residues 117-151 (SETSVANGSQSESSVSTPSASFEPNNTCENSQSRN) and 160-187 (TSDTKSDTATGGESAGHATSSQEPSGCS). Positions 117 to 196 (SETSVANGSQ…SDQRPAEDLN (80 aa)) are disordered. The UBX domain occupies 315 to 393 (ERSTVARIQF…ELAPSASVVL (79 aa)). An intramembrane segment occupies 414–434 (LLGTVLYPFLAIWRLISNFLF). Residues 435–508 (SNPPPTQTSV…TWNGNSTQQM (74 aa)) lie on the Cytoplasmic side of the membrane. The tract at residues 440–508 (TQTSVRVTSS…TWNGNSTQQM (69 aa)) is disordered. Over residues 441 to 458 (QTSVRVTSSEPPNPASSS) the composition is skewed to polar residues. The segment covering 459–491 (KSEKREPVRKRVLEKRGDDFKKEGKIYRLRTQD) has biased composition (basic and acidic residues). Residue Thr-489 is modified to Phosphothreonine. Positions 498-508 (NTWNGNSTQQM) are enriched in polar residues.

In terms of assembly, directly interacts with VCP. Interacts with UBQLN1. Forms a complex with VCP and UBQLN1. Expressed in many tissues, including heart, brain, placenta, lung, liver, skeletal muscle, kidney and pancreas. Accumulates in Alzheimer disease-afflicted brains (at protein level).

It is found in the endoplasmic reticulum membrane. It localises to the nucleus envelope. In terms of biological role, involved in endoplasmic reticulum-associated protein degradation (ERAD). Acts as a platform to recruit both UBQLN1 and VCP to the ER during ERAD. The polypeptide is UBX domain-containing protein 4 (UBXN4) (Homo sapiens (Human)).